A 63-amino-acid chain; its full sequence is Large ribosomal subunit protein bL32 (63 aa).

A compositionally biased stretch (basic residues) spans 1–16 (MAVPKRKTSRMKRGFR). The segment at 1–22 (MAVPKRKTSRMKRGFRRSADAI) is disordered.

The protein belongs to the bacterial ribosomal protein bL32 family.

The chain is Large ribosomal subunit protein bL32 from Beijerinckia indica subsp. indica (strain ATCC 9039 / DSM 1715 / NCIMB 8712).